A 738-amino-acid chain; its full sequence is Protein ALEX (738 aa).

6 disordered regions span residues 1-105 (MSPS…EEAM), 155-188 (REDYSPPPEESVPFQLDGEEFGGDSPPPDSASHA), 237-350 (TTFP…LPKP), 387-516 (MSGQ…LGQP), 528-578 (GEPG…LDPP), and 611-689 (GMRL…RPRI). Residues 257–273 (GSTTTPLSIWTAPQSQV) are compositionally biased toward polar residues. The segment covering 279-301 (KSREPQLRASTQRDPHLSDKQPR) has biased composition (basic and acidic residues). Residues 387-396 (MSGQNQTEGQ) are compositionally biased toward polar residues. Pro residues-rich tracts occupy residues 410–438 (QPPPPPPSQPPSQPLSQPPSQPPSQPPSQ), 448–467 (PSLPPGQSPTPKRSPQPRQP), and 476–485 (PGQPPSPLRS). Low complexity-rich tracts occupy residues 542 to 564 (PSLPAQQLPPEQPLLPAQSLPAG), 615 to 626 (RPASARSSPPAM), and 656 to 671 (ATRSATSSPEPSEAAS).

Belongs to the ALEX family. In terms of assembly, interacts with the N-terminal region of the XLas isoforms of guanine nucleotide-binding protein G(s) subunit alpha.

It is found in the cell membrane. The protein resides in the cell projection. The protein localises to the ruffle. In terms of biological role, may inhibit the adenylyl cyclase-stimulating activity of guanine nucleotide-binding protein G(s) subunit alpha which is produced from the same locus in a different open reading frame. In Rattus norvegicus (Rat), this protein is Protein ALEX.